A 104-amino-acid polypeptide reads, in one-letter code: NADH-quinone oxidoreductase subunit K (104 aa).

The next 3 membrane-spanning stretches (helical) occupy residues 4–24 (VPASAYLTLAIILFCIGLFGA), 31–51 (VIVLVCIELMLNAVNLNLVAF), and 67–87 (LFTMAVAAAEAAVGLAILIAL).

It belongs to the complex I subunit 4L family. In terms of assembly, NDH-1 is composed of 14 different subunits. Subunits NuoA, H, J, K, L, M, N constitute the membrane sector of the complex.

The protein localises to the cell membrane. The catalysed reaction is a quinone + NADH + 5 H(+)(in) = a quinol + NAD(+) + 4 H(+)(out). In terms of biological role, NDH-1 shuttles electrons from NADH, via FMN and iron-sulfur (Fe-S) centers, to quinones in the respiratory chain. The immediate electron acceptor for the enzyme in this species is believed to be a menaquinone. Couples the redox reaction to proton translocation (for every two electrons transferred, four hydrogen ions are translocated across the cytoplasmic membrane), and thus conserves the redox energy in a proton gradient. The protein is NADH-quinone oxidoreductase subunit K of Bacillus cereus (strain AH187).